Consider the following 302-residue polypeptide: 4-hydroxy-tetrahydrodipicolinate synthase (302 aa).

Residue Thr-55 participates in pyruvate binding. Tyr-144 functions as the Proton donor/acceptor in the catalytic mechanism. Lys-172 functions as the Schiff-base intermediate with substrate in the catalytic mechanism. Val-214 contributes to the pyruvate binding site.

This sequence belongs to the DapA family. As to quaternary structure, homotetramer; dimer of dimers.

It is found in the cytoplasm. It carries out the reaction L-aspartate 4-semialdehyde + pyruvate = (2S,4S)-4-hydroxy-2,3,4,5-tetrahydrodipicolinate + H2O + H(+). It functions in the pathway amino-acid biosynthesis; L-lysine biosynthesis via DAP pathway; (S)-tetrahydrodipicolinate from L-aspartate: step 3/4. Functionally, catalyzes the condensation of (S)-aspartate-beta-semialdehyde [(S)-ASA] and pyruvate to 4-hydroxy-tetrahydrodipicolinate (HTPA). In Prochlorococcus marinus (strain MIT 9313), this protein is 4-hydroxy-tetrahydrodipicolinate synthase.